Consider the following 704-residue polypeptide: Elongation factor G (704 aa).

Positions 8-290 constitute a tr-type G domain; the sequence is EKYRNIGICA…GVVRYLPAPN (283 aa). GTP contacts are provided by residues 17-24, 88-92, and 142-145; these read AHVDAGKT, DTPGH, and NKMD.

The protein belongs to the TRAFAC class translation factor GTPase superfamily. Classic translation factor GTPase family. EF-G/EF-2 subfamily.

It is found in the cytoplasm. Catalyzes the GTP-dependent ribosomal translocation step during translation elongation. During this step, the ribosome changes from the pre-translocational (PRE) to the post-translocational (POST) state as the newly formed A-site-bound peptidyl-tRNA and P-site-bound deacylated tRNA move to the P and E sites, respectively. Catalyzes the coordinated movement of the two tRNA molecules, the mRNA and conformational changes in the ribosome. This is Elongation factor G from Francisella tularensis subsp. mediasiatica (strain FSC147).